Consider the following 375-residue polypeptide: Alcohol dehydrogenase 1 (375 aa).

Ser-2 carries the N-acetylserine modification. Residues Cys-47, His-68, Cys-98, Cys-101, Cys-104, Cys-112, and Cys-175 each coordinate Zn(2+). NAD(+) contacts are provided by residues 200–205 (GLGGVG), Asp-224, Lys-229, 293–295 (LGV), and Arg-370.

The protein belongs to the zinc-containing alcohol dehydrogenase family. Class-I subfamily. Homodimer. Zn(2+) is required as a cofactor.

It is found in the cytoplasm. It catalyses the reaction a primary alcohol + NAD(+) = an aldehyde + NADH + H(+). It carries out the reaction a secondary alcohol + NAD(+) = a ketone + NADH + H(+). The chain is Alcohol dehydrogenase 1 (ADH1) from Apteryx australis (Southern brown kiwi).